The following is a 150-amino-acid chain: SsrA-binding protein (150 aa).

It belongs to the SmpB family.

Its subcellular location is the cytoplasm. Its function is as follows. Required for rescue of stalled ribosomes mediated by trans-translation. Binds to transfer-messenger RNA (tmRNA), required for stable association of tmRNA with ribosomes. tmRNA and SmpB together mimic tRNA shape, replacing the anticodon stem-loop with SmpB. tmRNA is encoded by the ssrA gene; the 2 termini fold to resemble tRNA(Ala) and it encodes a 'tag peptide', a short internal open reading frame. During trans-translation Ala-aminoacylated tmRNA acts like a tRNA, entering the A-site of stalled ribosomes, displacing the stalled mRNA. The ribosome then switches to translate the ORF on the tmRNA; the nascent peptide is terminated with the 'tag peptide' encoded by the tmRNA and targeted for degradation. The ribosome is freed to recommence translation, which seems to be the essential function of trans-translation. In Polynucleobacter asymbioticus (strain DSM 18221 / CIP 109841 / QLW-P1DMWA-1) (Polynucleobacter necessarius subsp. asymbioticus), this protein is SsrA-binding protein.